Here is a 473-residue protein sequence, read N- to C-terminus: Mitochondrial adenyl nucleotide antiporter SLC25A24-B (473 aa).

The interval 1–173 is regulatory N-terminal domain; it reads MLEQVQKFLL…RYWKHSTVLD (173 aa). Residues 1–197 lie on the Mitochondrial intermembrane side of the membrane; that stretch reads MLEQVQKFLL…EKKTGQWWKQ (197 aa). 4 consecutive EF-hand domains span residues 19-54, 55-88, 86-121, and 122-157; these read DSQS…MGME, VGKG…EEHE, EHEK…LGIK, and ISLD…NPAD. Ca(2+) is bound by residues Asp32, Asn34, Asp36, Lys38, Glu43, Asp68, Asn70, Asp72, His74, Glu79, Asp99, Asn101, Asp103, Lys105, Glu110, Asp135, Asp137, Thr139, Thr141, and Glu146. The tract at residues 159–168 is linker region; it reads IQQIIRYWKH. The C-terminal transmembrane transporter domain stretch occupies residues 174-473; that stretch reads IGDSLTIPDE…YEKMKVQLGI (300 aa). Solcar repeat units follow at residues 192 to 277, 285 to 370, and 382 to 470; these read GQWW…YKKL, LGTA…LKNY, and PGVL…MKVQ. Residues 198 to 215 form a helical membrane-spanning segment; sequence LMAGGMAGAVSRTGTAPL. At 216–251 the chain is on the mitochondrial matrix side; it reads DRLKVMMQVHGSKGNSNIITGLKQMVKEGGIRSLWR. A helical membrane pass occupies residues 252–271; that stretch reads GNGVNVIKIAPETAMKFWAY. Over 272 to 294 the chain is Mitochondrial intermembrane; sequence EQYKKLFTSESGKLGTAERFVAG. The chain crosses the membrane as a helical span at residues 295–308; the sequence is SLAGATAQTSIYPM. Residues 309 to 344 are Mitochondrial matrix-facing; it reads EVLKTRLAVGRTGQYSGMFDCAKKIMQKEGIRAFYK. The helical transmembrane segment at 345–364 threads the bilayer; it reads GYIPNILGIIPYAGIDLAIY. Residues 365–387 lie on the Mitochondrial intermembrane side of the membrane; the sequence is ETLKNYWLQNHAKDSANPGVLVL. Residues 388 to 405 form a helical membrane-spanning segment; sequence LGCGTASSTCGQLASYPL. The Mitochondrial matrix portion of the chain corresponds to 406-444; sequence ALIRTRMQAQASIEGAPQLNMGGLFRKIVAKEGFLGLYR. Residues 445–464 form a helical membrane-spanning segment; the sequence is GIGPNFLKVLPAVSISYVVY. Residues 465-473 lie on the Mitochondrial intermembrane side of the membrane; the sequence is EKMKVQLGI.

This sequence belongs to the mitochondrial carrier (TC 2.A.29) family. Monomer.

It localises to the mitochondrion inner membrane. It catalyses the reaction Mg(2+)(out) + phosphate(in) + ATP(out) = Mg(2+)(in) + phosphate(out) + ATP(in). The catalysed reaction is ADP(out) + phosphate(in) + H(+)(out) = ADP(in) + phosphate(out) + H(+)(in). The enzyme catalyses AMP(out) + phosphate(in) = AMP(in) + phosphate(out). It carries out the reaction phosphate(in) + ATP(out) + 2 H(+)(out) = phosphate(out) + ATP(in) + 2 H(+)(in). It catalyses the reaction dADP(in) + ADP(out) = dADP(out) + ADP(in). The catalysed reaction is Mg(2+)(in) + ADP(out) + ATP(in) + H(+)(out) = Mg(2+)(out) + ADP(in) + ATP(out) + H(+)(in). The enzyme catalyses ADP(out) + diphosphate(in) = ADP(in) + diphosphate(out). It carries out the reaction dAMP(in) + ADP(out) + H(+)(out) = dAMP(out) + ADP(in) + H(+)(in). It catalyses the reaction 3'-AMP(in) + ADP(out) + H(+)(out) = 3'-AMP(out) + ADP(in) + H(+)(in). The catalysed reaction is dAMP(out) + phosphate(in) = dAMP(in) + phosphate(out). The enzyme catalyses 3'-AMP(out) + phosphate(in) = 3'-AMP(in) + phosphate(out). It carries out the reaction dADP(out) + phosphate(in) + H(+)(out) = dADP(in) + phosphate(out) + H(+)(in). Activated by an increase in cytosolic calcium levels that induce a conformational change of the N-terminal regulatory domain, uncapping the channel and allowing transport. Inhibited by bathophenanthroline, mersalyl, p-hydroxymercuribenzoate, bromcresol purple and tannic acid. Functionally, electroneutral antiporter that mediates the transport of adenyl nucleotides through the inner mitochondrial membrane. Originally identified as an ATP-magnesium/inorganic phosphate antiporter, it also acts as a broad specificity adenyl nucleotide antiporter. By regulating the mitochondrial matrix adenyl nucleotide pool could adapt to changing cellular energetic demands and indirectly regulate adenyl nucleotide-dependent metabolic pathways. The chain is Mitochondrial adenyl nucleotide antiporter SLC25A24-B (slc25a24-b) from Xenopus laevis (African clawed frog).